A 487-amino-acid polypeptide reads, in one-letter code: Probable aspartic-type endopeptidase opsB (487 aa).

The first 20 residues, 1–20 (MQKSWLVLLVACLGLQGTTA), serve as a signal peptide directing secretion. The Peptidase A1 domain maps to 69 to 398 (YFCNITLGTP…DLSNNEISLA (330 aa)). The N-linked (GlcNAc...) asparagine glycan is linked to asparagine 72. Residue aspartate 87 is part of the active site. N-linked (GlcNAc...) asparagine glycans are attached at residues asparagine 99, asparagine 111, asparagine 132, and asparagine 272. Aspartate 286 is an active-site residue. N-linked (GlcNAc...) asparagine glycosylation is found at asparagine 329 and asparagine 403. A lipid anchor (GPI-anchor amidated alanine) is attached at alanine 463. The propeptide at 464–487 (PAGPTDVPKHLVLGAAAIGYVLAF) is removed in mature form.

It belongs to the peptidase A1 family.

The protein resides in the cell membrane. Functionally, probable GPI-anchored aspartic-type endopeptidase. This chain is Probable aspartic-type endopeptidase opsB (opsB), found in Aspergillus oryzae (strain ATCC 42149 / RIB 40) (Yellow koji mold).